The following is a 195-amino-acid chain: HTH-type transcriptional regulator BetI (195 aa).

The 61-residue stretch at 8–68 folds into the HTH tetR-type domain; that stretch reads PIRRQQLIEA…ATMRYLISHL (61 aa). The H-T-H motif DNA-binding region spans 31 to 50; sequence SIVQIARRAGVSNGIISHYF.

It functions in the pathway amine and polyamine biosynthesis; betaine biosynthesis via choline pathway [regulation]. Its function is as follows. Repressor involved in the biosynthesis of the osmoprotectant glycine betaine. It represses transcription of the choline transporter BetT and the genes of BetAB involved in the synthesis of glycine betaine. In Pectobacterium carotovorum subsp. carotovorum (strain PC1), this protein is HTH-type transcriptional regulator BetI.